We begin with the raw amino-acid sequence, 495 residues long: Glucose-6-phosphate 1-dehydrogenase (495 aa).

N-acetylserine is present on Ser-1. NADP(+) is bound by residues 15-22, Arg-49, and Lys-149; that span reads GASGDLAR. Residues Lys-149, 179–183, Glu-217, and Asp-236 each bind D-glucose 6-phosphate; that span reads HYLGK. His-241 functions as the Proton acceptor in the catalytic mechanism. Arg-332 serves as a coordination point for NADP(+). Lys-335 lines the D-glucose 6-phosphate pocket. Positions 341, 345, and 367 each coordinate NADP(+). Gln-369 contacts D-glucose 6-phosphate. NADP(+) contacts are provided by residues 375 to 377, 395 to 397, and Lys-463; these read YLK and DLT.

It belongs to the glucose-6-phosphate dehydrogenase family.

The enzyme catalyses D-glucose 6-phosphate + NADP(+) = 6-phospho-D-glucono-1,5-lactone + NADPH + H(+). The protein operates within carbohydrate degradation; pentose phosphate pathway; D-ribulose 5-phosphate from D-glucose 6-phosphate (oxidative stage): step 1/3. Functionally, catalyzes the rate-limiting step of the oxidative pentose-phosphate pathway, which represents a route for the dissimilation of carbohydrates besides glycolysis. The main function of this enzyme is to provide reducing power (NADPH) and pentose phosphates for fatty acid and nucleic acid synthesis. In Cyberlindnera jadinii (Torula yeast), this protein is Glucose-6-phosphate 1-dehydrogenase.